The chain runs to 401 residues: Exodeoxyribonuclease 7 large subunit (401 aa).

It belongs to the XseA family. In terms of assembly, heterooligomer composed of large and small subunits.

It localises to the cytoplasm. It carries out the reaction Exonucleolytic cleavage in either 5'- to 3'- or 3'- to 5'-direction to yield nucleoside 5'-phosphates.. Functionally, bidirectionally degrades single-stranded DNA into large acid-insoluble oligonucleotides, which are then degraded further into small acid-soluble oligonucleotides. The chain is Exodeoxyribonuclease 7 large subunit from Clostridioides difficile (strain 630) (Peptoclostridium difficile).